The chain runs to 232 residues: H-2 class II histocompatibility antigen, E-S beta chain (232 aa).

The interval 1 to 90 (WFLEYSTSEC…LDKFLVPRRV (90 aa)) is beta-1. Topologically, residues 1 to 193 (WFLEYSTSEC…KAQSTSAQNK (193 aa)) are extracellular. Disulfide bonds link Cys10–Cys74 and Cys112–Cys168. Asn14 carries an N-linked (GlcNAc...) asparagine glycan. The interval 91 to 193 (EPTVTVYPTK…KAQSTSAQNK (103 aa)) is beta-2. The Ig-like C1-type domain maps to 92 to 182 (PTVTVYPTKT…PSLTDPVTVE (91 aa)). The helical transmembrane segment at 194-216 (MLSGVGGFVLGLLFLGAGLFIYF) threads the bilayer. Residues 217–232 (RNQKGQSGLQPTGLLS) lie on the Cytoplasmic side of the membrane.

Belongs to the MHC class II family. Post-translationally, ubiquitinated in immature dendritic cells leading to down-regulation of MHC class II.

The protein resides in the membrane. The polypeptide is H-2 class II histocompatibility antigen, E-S beta chain (H2-Eb1) (Mus musculus (Mouse)).